Reading from the N-terminus, the 217-residue chain is Phosphoenolpyruvate guanylyltransferase (217 aa).

3 residues coordinate phosphoenolpyruvate: T150, G165, and S168.

This sequence belongs to the CofC family.

It catalyses the reaction phosphoenolpyruvate + GTP + H(+) = enolpyruvoyl-2-diphospho-5'-guanosine + diphosphate. It functions in the pathway cofactor biosynthesis; coenzyme F420 biosynthesis. Its function is as follows. Guanylyltransferase that catalyzes the activation of phosphoenolpyruvate (PEP) as enolpyruvoyl-2-diphospho-5'-guanosine, via the condensation of PEP with GTP. It is involved in the biosynthesis of coenzyme F420, a hydride carrier cofactor. This Mycobacterium marinum (strain ATCC BAA-535 / M) protein is Phosphoenolpyruvate guanylyltransferase.